The chain runs to 209 residues: Uracil phosphoribosyltransferase (209 aa).

Residues arginine 79, arginine 104, and 131–139 (DPMLATGNS) contribute to the 5-phospho-alpha-D-ribose 1-diphosphate site. Residues isoleucine 194 and 199-201 (GDA) contribute to the uracil site. Aspartate 200 contacts 5-phospho-alpha-D-ribose 1-diphosphate.

It belongs to the UPRTase family. Mg(2+) is required as a cofactor.

It catalyses the reaction UMP + diphosphate = 5-phospho-alpha-D-ribose 1-diphosphate + uracil. The protein operates within pyrimidine metabolism; UMP biosynthesis via salvage pathway; UMP from uracil: step 1/1. With respect to regulation, allosterically activated by GTP. In terms of biological role, catalyzes the conversion of uracil and 5-phospho-alpha-D-ribose 1-diphosphate (PRPP) to UMP and diphosphate. The protein is Uracil phosphoribosyltransferase of Acidovorax sp. (strain JS42).